The sequence spans 566 residues: 15-cis-phytoene desaturase, chloroplastic/chromoplastic (566 aa).

The transit peptide at methionine 1 to alanine 86 directs the protein to the chloroplast and chromoplast. Residues alanine 103, glutamate 122–alanine 123, lysine 130, histidine 147–isoleucine 148, and tyrosine 153 contribute to the FAD site. Position 288 (arginine 288) interacts with substrate. 2 residues coordinate FAD: isoleucine 330 and aspartate 519. Alanine 527 contacts substrate. An FAD-binding site is contributed by methionine 529.

It belongs to the carotenoid/retinoid oxidoreductase family. In terms of assembly, homotetramer. The cofactor is FAD.

It localises to the plastid. Its subcellular location is the chloroplast. The protein resides in the chromoplast. It is found in the membrane. It catalyses the reaction 2 a plastoquinone + 15-cis-phytoene = 9,9',15-tri-cis-zeta-carotene + 2 a plastoquinol. It participates in carotenoid biosynthesis; lycopene biosynthesis. Its function is as follows. Converts phytoene into zeta-carotene via the intermediary of phytofluene by the symmetrical introduction of two double bonds at the C-11 and C-11' positions of phytoene with a concomitant isomerization of two neighboring double bonds at the C9 and C9' positions from trans to cis. The chain is 15-cis-phytoene desaturase, chloroplastic/chromoplastic (PDS) from Arabidopsis thaliana (Mouse-ear cress).